A 141-amino-acid polypeptide reads, in one-letter code: Ribosome-binding factor A (141 aa).

The protein belongs to the RbfA family. As to quaternary structure, monomer. Binds 30S ribosomal subunits, but not 50S ribosomal subunits or 70S ribosomes.

The protein localises to the cytoplasm. Its function is as follows. One of several proteins that assist in the late maturation steps of the functional core of the 30S ribosomal subunit. Associates with free 30S ribosomal subunits (but not with 30S subunits that are part of 70S ribosomes or polysomes). Required for efficient processing of 16S rRNA. May interact with the 5'-terminal helix region of 16S rRNA. This is Ribosome-binding factor A from Beijerinckia indica subsp. indica (strain ATCC 9039 / DSM 1715 / NCIMB 8712).